Reading from the N-terminus, the 221-residue chain is 3-isopropylmalate dehydratase small subunit (221 aa).

It belongs to the LeuD family. LeuD type 1 subfamily. In terms of assembly, heterodimer of LeuC and LeuD.

The catalysed reaction is (2R,3S)-3-isopropylmalate = (2S)-2-isopropylmalate. It functions in the pathway amino-acid biosynthesis; L-leucine biosynthesis; L-leucine from 3-methyl-2-oxobutanoate: step 2/4. Functionally, catalyzes the isomerization between 2-isopropylmalate and 3-isopropylmalate, via the formation of 2-isopropylmaleate. This Nitrosomonas europaea (strain ATCC 19718 / CIP 103999 / KCTC 2705 / NBRC 14298) protein is 3-isopropylmalate dehydratase small subunit.